We begin with the raw amino-acid sequence, 99 residues long: MPVEYYLWLAAILFGIGLLGVLTKRNALILMMSVELMLNAANLTFLAFARRSGDLAGHAIAFFVIAVAAAEAAVGLAVVIAIYRSRGAINVDEVRVLSE.

Helical transmembrane passes span 2–22, 28–48, and 60–80; these read PVEYYLWLAAILFGIGLLGVL, LILMMSVELMLNAANLTFLAF, and IAFFVIAVAAAEAAVGLAVVI.

It belongs to the complex I subunit 4L family. NDH-1 is composed of 14 different subunits. Subunits NuoA, H, J, K, L, M, N constitute the membrane sector of the complex.

It is found in the cell inner membrane. The catalysed reaction is a quinone + NADH + 5 H(+)(in) = a quinol + NAD(+) + 4 H(+)(out). NDH-1 shuttles electrons from NADH, via FMN and iron-sulfur (Fe-S) centers, to quinones in the respiratory chain. The immediate electron acceptor for the enzyme in this species is believed to be ubiquinone. Couples the redox reaction to proton translocation (for every two electrons transferred, four hydrogen ions are translocated across the cytoplasmic membrane), and thus conserves the redox energy in a proton gradient. This Anaeromyxobacter dehalogenans (strain 2CP-1 / ATCC BAA-258) protein is NADH-quinone oxidoreductase subunit K.